A 283-amino-acid polypeptide reads, in one-letter code: 4-diphosphocytidyl-2-C-methyl-D-erythritol kinase (283 aa).

Lys12 is a catalytic residue. 94-104 contacts ATP; sequence PAQAGLGGGSS. Asp136 is an active-site residue.

Belongs to the GHMP kinase family. IspE subfamily.

It carries out the reaction 4-CDP-2-C-methyl-D-erythritol + ATP = 4-CDP-2-C-methyl-D-erythritol 2-phosphate + ADP + H(+). It participates in isoprenoid biosynthesis; isopentenyl diphosphate biosynthesis via DXP pathway; isopentenyl diphosphate from 1-deoxy-D-xylulose 5-phosphate: step 3/6. Its function is as follows. Catalyzes the phosphorylation of the position 2 hydroxy group of 4-diphosphocytidyl-2C-methyl-D-erythritol. The sequence is that of 4-diphosphocytidyl-2-C-methyl-D-erythritol kinase from Acidovorax sp. (strain JS42).